Consider the following 591-residue polypeptide: CDK5RAP3 protein homolog (591 aa).

Residues 232–250 (RAGAPSSAKGPASSASAPP) show a composition bias toward low complexity. Disordered stretches follow at residues 232-252 (RAGA…PPAL) and 269-303 (TAPP…DAGG). Residues 279–303 (AGAGASGQGGGIEIDWGDSGGDAGG) show a composition bias toward gly residues. Short sequence motifs (shuffled ATG8-binding motif) lie at residues 311–314 (IDWD), 334–337 (INWD), and 369–372 (IDWD). A compositionally biased stretch (low complexity) spans 386 to 401 (NNRAGDVAEGEAAASL). The segment at 386–416 (NNRAGDVAEGEAAASLSGGGGGGASSGDPDD) is disordered.

It belongs to the CDK5RAP3 family. As to quaternary structure, substrate adapter component of the UFM1 ribosome E3 ligase (UREL) complex. Interacts with ATG8 family proteins.

Its function is as follows. Substrate adapter of E3 ligase complexes mediating ufmylation, the covalent attachment of the ubiquitin-like modifier UFM1 to substrate proteins, and which is involved in various processes, such as ribosome recycling and reticulophagy (also called ER-phagy). The protein is CDK5RAP3 protein homolog of Chlamydomonas reinhardtii (Chlamydomonas smithii).